The sequence spans 122 residues: Large ribosomal subunit protein uL14 (122 aa).

It belongs to the universal ribosomal protein uL14 family. In terms of assembly, part of the 50S ribosomal subunit. Forms a cluster with proteins L3 and L19. In the 70S ribosome, L14 and L19 interact and together make contacts with the 16S rRNA in bridges B5 and B8.

Binds to 23S rRNA. Forms part of two intersubunit bridges in the 70S ribosome. The polypeptide is Large ribosomal subunit protein uL14 (Azorhizobium caulinodans (strain ATCC 43989 / DSM 5975 / JCM 20966 / LMG 6465 / NBRC 14845 / NCIMB 13405 / ORS 571)).